A 504-amino-acid chain; its full sequence is Protein psiD (504 aa).

The N-terminal stretch at 1 to 21 (MKYSYLLLILLLSNLYKEGFS) is a signal peptide. Asparagine 87, asparagine 136, asparagine 236, asparagine 252, asparagine 290, and asparagine 373 each carry an N-linked (GlcNAc...) asparagine glycan. The PA14 domain maps to 111 to 251 (LTRVGDSTYA…YDACGVCDGH (141 aa)). A compositionally biased stretch (low complexity) spans 417-430 (TVTPTVTPTVTPTP). A disordered region spans residues 417–453 (TVTPTVTPTVTPTPTTTPTPSPTTVPPRPTPTPLPAD). A compositionally biased stretch (pro residues) spans 431–453 (TTTPTPSPTTVPPRPTPTPLPAD). Asparagine 483 carries N-linked (GlcNAc...) asparagine glycosylation.

It belongs to the prespore-cell-inducing factor family.

It localises to the secreted. The sequence is that of Protein psiD (psiD) from Dictyostelium discoideum (Social amoeba).